Reading from the N-terminus, the 170-residue chain is MNINKPLEILGHVSWLWASSPLHRNWPVSLFAINVLPAIQANQYVLLTRDDYPVAYCSWANLSLENEIKYLNDVTSLVAEDWTSGDRKWFIDWIAPFGDNGALYKYMRKKFPDELFRAIRVDPKTHVGKVSEFHGGKIDKQLANKIFKQYHHELITEVKRKSDFNFSLTG.

Catalysis depends on residues histidine 23 and aspartate 92. Histidine 151 contacts heme.

It belongs to the RTX toxin acyltransferase family. As to quaternary structure, monomer. Proteolytically cleaved by the protease systems ClpAP, ClpXP and FtsH, leading to its degradation.

The protein localises to the cytoplasm. The enzyme catalyses tetradecanoyl-[ACP] + L-lysyl-[protein] = N(6)-tetradecanoyl-L-lysyl-[protein] + holo-[ACP] + H(+). The acyltransferase activity is inhibited by heme. In terms of biological role, protein-lysine myristoyltransferase that catalyzes myristoylation of the protoxin (HlyA) at two internal lysine residues, thereby converting it to the active toxin. This is Protein-lysine myristoyltransferase HlyC from Escherichia coli.